A 247-amino-acid chain; its full sequence is Geranylgeranylglyceryl phosphate synthase (247 aa).

Positions 23 and 52 each coordinate Mg(2+). Residues 171–177 (YLEAGSG), 203–204 (GG), and 225–226 (GT) each bind sn-glycerol 1-phosphate.

It belongs to the GGGP/HepGP synthase family. Group II subfamily. Requires Mg(2+) as cofactor.

It is found in the cytoplasm. The catalysed reaction is sn-glycerol 1-phosphate + (2E,6E,10E)-geranylgeranyl diphosphate = sn-3-O-(geranylgeranyl)glycerol 1-phosphate + diphosphate. It participates in membrane lipid metabolism; glycerophospholipid metabolism. Prenyltransferase that catalyzes the transfer of the geranylgeranyl moiety of geranylgeranyl diphosphate (GGPP) to the C3 hydroxyl of sn-glycerol-1-phosphate (G1P). This reaction is the first ether-bond-formation step in the biosynthesis of archaeal membrane lipids. The polypeptide is Geranylgeranylglyceryl phosphate synthase (Methanosarcina mazei (strain ATCC BAA-159 / DSM 3647 / Goe1 / Go1 / JCM 11833 / OCM 88) (Methanosarcina frisia)).